The chain runs to 1214 residues: [F-actin]-monooxygenase mical1 (1214 aa).

The segment at 1-488 is monooxygenase domain; that stretch reads MVNPLDSVNP…KRLYEAEEQE (488 aa). FAD-binding positions include cysteine 96, 115–117, 122–124, phenylalanine 182, tyrosine 292, and aspartate 392; these read EKR and RNN. Residues 484–505 form a disordered region; sequence AEEQESKPNKLKKPDIKAKPRK. A Calponin-homology (CH) domain is found at 508 to 614; sequence MKRLEELLSW…YLTQIRNALT (107 aa). Positions 649-676 are disordered; sequence HKDRLASVKGPRQQNMKEKEEKKDVKEE. Residues 663–676 show a composition bias toward basic and acidic residues; that stretch reads NMKEKEEKKDVKEE. In terms of domain architecture, LIM zinc-binding spans 686–748; the sequence is EPCYFCKKHL…ELHSLAEEEE (63 aa). The Zn(2+) site is built by cysteine 688, cysteine 691, histidine 709, cysteine 712, cysteine 715, cysteine 718, cysteine 738, and histidine 741. Positions 747–1019 are disordered; it reads EEGDEGHGGA…DDEDEDEEDL (273 aa). Positions 796–815 are enriched in acidic residues; the sequence is PDFDESTEFPAPDQDEPPDL. Positions 828-841 are enriched in polar residues; that stretch reads SAENTNMENQQHNI. The segment covering 910 to 922 has biased composition (low complexity); that stretch reads RGSSSAASTSSSS. Residues 974–987 are compositionally biased toward polar residues; it reads SPWNLSSPRLQQRF. The segment covering 1003 to 1019 has biased composition (acidic residues); the sequence is VSEDDNEDDEDEDEEDL. The region spanning 1053–1199 is the bMERB domain; the sequence is KMTEIQRFHK…EVNDQFNSSL (147 aa). Positions 1061–1131 form a coiled coil; the sequence is HKAQSIQRRL…DLMVASRQLE (71 aa). A disordered region spans residues 1194-1214; sequence QFNSSLDAKRRSTTASQVHWE.

This sequence belongs to the Mical family. FAD is required as a cofactor.

The protein resides in the cytoplasm. It is found in the cytoskeleton. It localises to the midbody. The protein localises to the endosome membrane. It catalyses the reaction L-methionyl-[F-actin] + NADPH + O2 + H(+) = L-methionyl-(R)-S-oxide-[F-actin] + NADP(+) + H2O. The catalysed reaction is NADPH + O2 + H(+) = H2O2 + NADP(+). Monooxygenase that promotes depolymerization of F-actin by mediating oxidation of specific methionine residues on actin to form methionine-sulfoxide, resulting in actin filament disassembly and prevent repolymerization. May be involved in endosomal tubule extension and neosynthesized protein export. The polypeptide is [F-actin]-monooxygenase mical1 (mical1) (Danio rerio (Zebrafish)).